We begin with the raw amino-acid sequence, 54 residues long: Large ribosomal subunit protein bL33 (54 aa).

Belongs to the bacterial ribosomal protein bL33 family.

This chain is Large ribosomal subunit protein bL33, found in Corynebacterium glutamicum (strain R).